A 338-amino-acid polypeptide reads, in one-letter code: Aspartate carbamoyltransferase catalytic subunit (338 aa).

Positions 71 and 72 each coordinate carbamoyl phosphate. Lys99 serves as a coordination point for L-aspartate. Carbamoyl phosphate contacts are provided by Arg121, His151, and Gln154. L-aspartate contacts are provided by Arg184 and Arg239. Carbamoyl phosphate is bound by residues Gly280 and Pro281.

This sequence belongs to the aspartate/ornithine carbamoyltransferase superfamily. ATCase family. Heterododecamer (2C3:3R2) of six catalytic PyrB chains organized as two trimers (C3), and six regulatory PyrI chains organized as three dimers (R2).

It carries out the reaction carbamoyl phosphate + L-aspartate = N-carbamoyl-L-aspartate + phosphate + H(+). Its pathway is pyrimidine metabolism; UMP biosynthesis via de novo pathway; (S)-dihydroorotate from bicarbonate: step 2/3. Functionally, catalyzes the condensation of carbamoyl phosphate and aspartate to form carbamoyl aspartate and inorganic phosphate, the committed step in the de novo pyrimidine nucleotide biosynthesis pathway. The sequence is that of Aspartate carbamoyltransferase catalytic subunit from Stutzerimonas stutzeri (strain A1501) (Pseudomonas stutzeri).